The chain runs to 2290 residues: Autophagy-related protein 2 (2290 aa).

A Chorein N-terminal domain is found at 10 to 99 (WCKVMLQRYM…MCIEDLQLTF (90 aa)). A required for epg-6 binding region spans residues 829–1549 (DSMMKSVSAD…PNRDHSAFVV (721 aa)). Disordered regions lie at residues 1678 to 1727 (IGSK…LGDL), 1805 to 1851 (DDLF…DLTG), 1898 to 1919 (SETERDSSASPVTSSPIKPARN), and 1967 to 2003 (EHGNFLDSIDNEDDNEKQKIEEEMEEDEKEEEEERNK). The span at 1681 to 1692 (KKTTPKTSVSSS) shows a compositional bias: low complexity. Over residues 1714–1723 (RPSPVQPPTP) the composition is skewed to pro residues. Positions 1810-1830 (QSYSSSSSETESESSAPQSSQ) are enriched in low complexity. The stretch at 1972-2011 (LDSIDNEDDNEKQKIEEEMEEDEKEEEEERNKEIQEAVER) forms a coiled coil. The span at 1988-1999 (EEMEEDEKEEEE) shows a compositional bias: acidic residues.

Belongs to the ATG2 family. As to quaternary structure, interacts with epg-6; the interaction is direct.

The protein localises to the preautophagosomal structure membrane. The protein resides in the lipid droplet. It localises to the endoplasmic reticulum membrane. It is found in the cytoplasm. It catalyses the reaction a 1,2-diacyl-sn-glycero-3-phospho-L-serine(in) = a 1,2-diacyl-sn-glycero-3-phospho-L-serine(out). It carries out the reaction a 1,2-diacyl-sn-glycero-3-phosphoethanolamine(in) = a 1,2-diacyl-sn-glycero-3-phosphoethanolamine(out). Lipid transfer protein involved in autophagosome assembly and in the distribution of atg-9 and atg-13 during the autophagy-mediated degradation of protein aggregates. Tethers the edge of the isolation membrane (IM) to the endoplasmic reticulum (ER) and mediates direct lipid transfer from ER to IM for IM expansion. Binds to the ER exit site (ERES), which is the membrane source for autophagosome formation, and extracts phospholipids from the membrane source to the IM for membrane expansion. Involved in autophagy-mediated degradation of ribosomal RNA and ribosomal proteins in lysosomes, which is essential for maintaining nucleotide homeostasis. The protein is Autophagy-related protein 2 of Caenorhabditis elegans.